The primary structure comprises 698 residues: Ion-translocating oxidoreductase complex subunit C (698 aa).

2 4Fe-4S ferredoxin-type domains span residues Thr366–Tyr397 and Lys407–Tyr436. Positions 377, 380, 383, 387, 416, 419, 422, and 426 each coordinate [4Fe-4S] cluster.

Belongs to the 4Fe4S bacterial-type ferredoxin family. RnfC subfamily. In terms of assembly, the complex is composed of six subunits: RnfA, RnfB, RnfC, RnfD, RnfE and RnfG. [4Fe-4S] cluster is required as a cofactor.

The protein localises to the cell inner membrane. Part of a membrane-bound complex that couples electron transfer with translocation of ions across the membrane. This chain is Ion-translocating oxidoreductase complex subunit C, found in Yersinia pseudotuberculosis serotype O:1b (strain IP 31758).